The following is an 81-amino-acid chain: Photosystem I iron-sulfur center (81 aa).

2 consecutive 4Fe-4S ferredoxin-type domains span residues 2–31 and 39–68; these read SHSV…MIPW and IASA…VRVY. Residues C11, C14, C17, C21, C48, C51, C54, and C58 each contribute to the [4Fe-4S] cluster site.

In terms of assembly, the eukaryotic PSI reaction center is composed of at least 11 subunits. Requires [4Fe-4S] cluster as cofactor.

It is found in the plastid. It localises to the chloroplast thylakoid membrane. The enzyme catalyses reduced [plastocyanin] + hnu + oxidized [2Fe-2S]-[ferredoxin] = oxidized [plastocyanin] + reduced [2Fe-2S]-[ferredoxin]. Apoprotein for the two 4Fe-4S centers FA and FB of photosystem I (PSI); essential for photochemical activity. FB is the terminal electron acceptor of PSI, donating electrons to ferredoxin. The C-terminus interacts with PsaA/B/D and helps assemble the protein into the PSI complex. Required for binding of PsaD and PsaE to PSI. PSI is a plastocyanin-ferredoxin oxidoreductase, converting photonic excitation into a charge separation, which transfers an electron from the donor P700 chlorophyll pair to the spectroscopically characterized acceptors A0, A1, FX, FA and FB in turn. The chain is Photosystem I iron-sulfur center from Vitis vinifera (Grape).